The primary structure comprises 624 residues: MRFHRQGTAATVGVLLIVLLGFCWKLSESYGIVSTALPHKQPATKITDTPSIRWDNYHEFVRDIDFDNSTAIFNSIRAALRQSPSDIHPVGVSYFPAVIPKGTLMYHAGSKVPTTFEWLAMDHEFSYSFGLRSPSYGRKSLERRHGRFGNGTHGDHPKGPPPPPPPDEKDRGSQKMLTYRAARDLNKFLYLDGASAAKTDSGEMDTQLMLSNVIKEKLNLTDDGENERMAERLYAARICKWGKPFGLDGIIRVEVGFEVVLCDFSADNVELVSMLEMVQPNQYLGLPAPTVISKEEGWPLDENGNLVEDQLTDDQKAILEREDGWEKTFSNFNAVKSFNQLRAGTAHDNGEHRIHIDYRYLVSGINRTYIAPDPNNRRLLDEGMTWEKQLDMVDDLEKALEVGFDATQSMDWQLAFDELVLKFAPLLKSVSNILNSNGDINESIAINATALTLNFCLRFEPASNNSDEFGSGKDFAVYQYVSPYQALKTDADFLIWSSAVSVVGEIVDAIYKVNDLLIPEVYSFMTDNTTSSDLIKNVETARSTIDGLIESLGWIELNYRCERQCNWDEVCYTPSWGPSPMGMTEPGSHNEGFGTHFDESRQRLVINSKLQCININDLMVNRNH.

Residues 1–29 (MRFHRQGTAATVGVLLIVLLGFCWKLSES) form the signal peptide. 8 N-linked (GlcNAc...) asparagine glycosylation sites follow: asparagine 68, asparagine 150, asparagine 219, asparagine 366, asparagine 441, asparagine 447, asparagine 464, and asparagine 528. A disordered region spans residues 141-174 (LERRHGRFGNGTHGDHPKGPPPPPPPDEKDRGSQ).

It localises to the secreted. This is an uncharacterized protein from Saccharomyces cerevisiae (strain ATCC 204508 / S288c) (Baker's yeast).